The following is a 200-amino-acid chain: MSYLRPALVLLILLTLITGIAYPLLTTGLAHLMFSQQASGSLARLGDNVVGSTLIGQNFTQPGYFTGRPSATADRPYNPMASGGSNLASSNPALGQAIGERVKLQRQANPTQLGPVPVDLVTASGSGLDPHISLAAAYYQAPRIASIRQMPLSDVQQLIDNSMQKAIPSFFGEPVVNVLNLNMALDSHSHVKVPANPAKP.

A helical membrane pass occupies residues 6 to 26 (PALVLLILLTLITGIAYPLLT).

Belongs to the KdpC family. The system is composed of three essential subunits: KdpA, KdpB and KdpC.

The protein resides in the cell inner membrane. Part of the high-affinity ATP-driven potassium transport (or Kdp) system, which catalyzes the hydrolysis of ATP coupled with the electrogenic transport of potassium into the cytoplasm. This subunit acts as a catalytic chaperone that increases the ATP-binding affinity of the ATP-hydrolyzing subunit KdpB by the formation of a transient KdpB/KdpC/ATP ternary complex. This chain is Potassium-transporting ATPase KdpC subunit, found in Yersinia pseudotuberculosis serotype O:1b (strain IP 31758).